Here is a 535-residue protein sequence, read N- to C-terminus: CTP synthase (535 aa).

The amidoligase domain stretch occupies residues 1–267 (MTKFIFVTGG…DDIVIKKLGL (267 aa)). Serine 13 contacts CTP. Serine 13 is a UTP binding site. Residue 14–19 (SLGKGI) coordinates ATP. L-glutamine is bound at residue tyrosine 54. Aspartate 71 serves as a coordination point for ATP. Aspartate 71 and glutamate 141 together coordinate Mg(2+). CTP contacts are provided by residues 148–150 (DIE), 188–193 (KTKPTQ), and lysine 224. UTP contacts are provided by residues 188 to 193 (KTKPTQ) and lysine 224. Residues 292–534 (TIGIVGKYVS…IGASLKTNKL (243 aa)) enclose the Glutamine amidotransferase type-1 domain. Position 354 (glycine 354) interacts with L-glutamine. Cysteine 381 functions as the Nucleophile; for glutamine hydrolysis in the catalytic mechanism. L-glutamine contacts are provided by residues 382–385 (LGMQ), glutamate 405, and arginine 462. Residues histidine 507 and glutamate 509 contribute to the active site.

This sequence belongs to the CTP synthase family. As to quaternary structure, homotetramer.

The enzyme catalyses UTP + L-glutamine + ATP + H2O = CTP + L-glutamate + ADP + phosphate + 2 H(+). It catalyses the reaction L-glutamine + H2O = L-glutamate + NH4(+). It carries out the reaction UTP + NH4(+) + ATP = CTP + ADP + phosphate + 2 H(+). The protein operates within pyrimidine metabolism; CTP biosynthesis via de novo pathway; CTP from UDP: step 2/2. With respect to regulation, allosterically activated by GTP, when glutamine is the substrate; GTP has no effect on the reaction when ammonia is the substrate. The allosteric effector GTP functions by stabilizing the protein conformation that binds the tetrahedral intermediate(s) formed during glutamine hydrolysis. Inhibited by the product CTP, via allosteric rather than competitive inhibition. In terms of biological role, catalyzes the ATP-dependent amination of UTP to CTP with either L-glutamine or ammonia as the source of nitrogen. Regulates intracellular CTP levels through interactions with the four ribonucleotide triphosphates. This is CTP synthase from Carboxydothermus hydrogenoformans (strain ATCC BAA-161 / DSM 6008 / Z-2901).